The following is a 310-amino-acid chain: tRNA dimethylallyltransferase (310 aa).

An ATP-binding site is contributed by 14–21 (GPTASGKS). Substrate is bound at residue 16-21 (TASGKS). Interaction with substrate tRNA regions lie at residues 39-42 (DSMQ) and 163-167 (QRIVR).

This sequence belongs to the IPP transferase family. As to quaternary structure, monomer. It depends on Mg(2+) as a cofactor.

It catalyses the reaction adenosine(37) in tRNA + dimethylallyl diphosphate = N(6)-dimethylallyladenosine(37) in tRNA + diphosphate. Catalyzes the transfer of a dimethylallyl group onto the adenine at position 37 in tRNAs that read codons beginning with uridine, leading to the formation of N6-(dimethylallyl)adenosine (i(6)A). The sequence is that of tRNA dimethylallyltransferase from Brucella ovis (strain ATCC 25840 / 63/290 / NCTC 10512).